The sequence spans 512 residues: Putative aldehyde-dehydrogenase-like protein y4uC (512 aa).

The interval Met-14–Asn-41 is disordered. Residue Gly-266–Gly-271 coordinates NADP(+). Active-site residues include Glu-286 and Cys-320.

It belongs to the aldehyde dehydrogenase family.

The protein operates within amino-acid degradation; 4-aminobutanoate degradation. Could be a succinate-semialdehyde dehydrogenase (NADP(+)). The chain is Putative aldehyde-dehydrogenase-like protein y4uC from Sinorhizobium fredii (strain NBRC 101917 / NGR234).